We begin with the raw amino-acid sequence, 357 residues long: MALPASAIGFEGYEKRLEISFFESSFFADPDGKGLRALNKSQIDEILEPAECTIVDSLSNQYLDSYVLSESSLFVYPYKIIIKTCGTTKLLLSIPAILKLAESLSLSVRNVKYTRGSFIFPGAQSFPHRSFSEEVELLDNYFGKLGLESNAFIMGNPDQPQKWHVYSASVGSEQSSDPTYTLEMCMTGLDREKASVFYKSESSSAALMTTRSGIRKILPDSEICDFEFDPCGYSMNSIEEAAISTIHVTPEDGFSYASFEAAGYDLKAQNLGMMIERVLACFQPSEFSVAVHCDVTCKSLEQICSLELKEYSLDEKINEELGLGGSIIYKKFLRIDACGSPRSILKCCWKEDESEEE.

Residues Glu11 and Glu14 contribute to the active site. Ser71 functions as the Schiff-base intermediate with substrate; via pyruvic acid in the catalytic mechanism. Position 71 is a pyruvic acid (Ser); by autocatalysis (Ser71). Cys85 (proton donor; for catalytic activity) is an active-site residue. Residues Ser234 and His247 each act as proton acceptor; for processing activity in the active site.

It belongs to the eukaryotic AdoMetDC family. Pyruvate is required as a cofactor. Post-translationally, is synthesized initially as an inactive proenzyme. Formation of the active enzyme involves a self-maturation process in which the active site pyruvoyl group is generated from an internal serine residue via an autocatalytic post-translational modification. Two non-identical subunits are generated from the proenzyme in this reaction, and the pyruvate is formed at the N-terminus of the alpha chain, which is derived from the carboxyl end of the proenzyme. The post-translation cleavage follows an unusual pathway, termed non-hydrolytic serinolysis, in which the side chain hydroxyl group of the serine supplies its oxygen atom to form the C-terminus of the beta chain, while the remainder of the serine residue undergoes an oxidative deamination to produce ammonia and the pyruvoyl group blocking the N-terminus of the alpha chain.

The catalysed reaction is S-adenosyl-L-methionine + H(+) = S-adenosyl 3-(methylsulfanyl)propylamine + CO2. The protein operates within amine and polyamine biosynthesis; S-adenosylmethioninamine biosynthesis; S-adenosylmethioninamine from S-adenosyl-L-methionine: step 1/1. The polypeptide is S-adenosylmethionine decarboxylase proenzyme (SAMDC) (Catharanthus roseus (Madagascar periwinkle)).